Consider the following 87-residue polypeptide: uncharacterized protein (87 aa).

Belongs to the SF3B5 family.

This is an uncharacterized protein from Arabidopsis thaliana (Mouse-ear cress).